A 240-amino-acid chain; its full sequence is LexA repressor (240 aa).

Residues 26–46 (FDEMKEALDLASKSGIHRLIT) constitute a DNA-binding region (H-T-H motif). Catalysis depends on for autocatalytic cleavage activity residues serine 161 and lysine 199.

It belongs to the peptidase S24 family. As to quaternary structure, homodimer.

It carries out the reaction Hydrolysis of Ala-|-Gly bond in repressor LexA.. Its function is as follows. Represses a number of genes involved in the response to DNA damage (SOS response), including recA and lexA. In the presence of single-stranded DNA, RecA interacts with LexA causing an autocatalytic cleavage which disrupts the DNA-binding part of LexA, leading to derepression of the SOS regulon and eventually DNA repair. The sequence is that of LexA repressor from Brucella melitensis biotype 1 (strain ATCC 23456 / CCUG 17765 / NCTC 10094 / 16M).